Reading from the N-terminus, the 1604-residue chain is Ubiquitin carboxyl-terminal hydrolase 32 (1604 aa).

3 consecutive EF-hand domains span residues 91 to 126, 228 to 263, and 264 to 299; these read KDEEKAKYIFSLFSSESGSYVVREEMERMLHVVDGK, IRPSLSEGLFNAFDENRDNHIDFKEISCGLSACCRG, and PLAERQKFCFKVFDVDRDGVLSRVELKDMVVALLEV. The Ca(2+) site is built by aspartate 241, asparagine 243, aspartate 245, histidine 247, glutamate 252, aspartate 277, aspartate 279, aspartate 281, and glutamate 288. A DUSP domain is found at 369-585; it reads ATPEEEGQII…SNLALPRPVI (217 aa). The region spanning 734 to 1567 is the USP domain; it reads TGLSNLGNTC…SAYILFYEQQ (834 aa). Cysteine 743 acts as the Nucleophile in catalysis. Position 1173 is a phosphotyrosine (tyrosine 1173). Serine 1350 is subject to Phosphoserine. The interval 1353–1432 is disordered; it reads EEDVLLSKSP…SKENLDTSKE (80 aa). Residues 1360–1370 are compositionally biased toward polar residues; that stretch reads KSPSSLSANVT. Residues 1371–1399 are compositionally biased toward low complexity; that stretch reads SSPKGSPSSSRKSGASCPSSKNSSPNSSP. Phosphoserine is present on residues serine 1372 and serine 1376. Positions 1415-1424 are enriched in polar residues; it reads GSKNKLSNSK. Serine 1454 is subject to Phosphoserine. The segment at 1484 to 1504 is disordered; it reads SNGQLGNHSEEDSTDDQREET. Residues 1491–1504 are compositionally biased toward basic and acidic residues; it reads HSEEDSTDDQREET. The active-site Proton acceptor is histidine 1526. Serine 1588 is subject to Phosphoserine. Residue cysteine 1601 is modified to Cysteine methyl ester. Cysteine 1601 is lipidated: S-farnesyl cysteine. Positions 1602–1604 are cleaved as a propeptide — removed in mature form; the sequence is VLQ.

Belongs to the peptidase C19 family.

It localises to the golgi apparatus membrane. It carries out the reaction Thiol-dependent hydrolysis of ester, thioester, amide, peptide and isopeptide bonds formed by the C-terminal Gly of ubiquitin (a 76-residue protein attached to proteins as an intracellular targeting signal).. Its function is as follows. Deubiquitinase that can remove conjugated ubiquitin from target proteins, such as RAB7A and LAMTOR1. Acts as a positive regulator of the mTORC1 signaling by mediating deubiquitination of LAMTOR1, thereby promoting the association between LAMTOR1 and the lysosomal V-ATPase complex and subsequent activation of the mTORC1 complex. This chain is Ubiquitin carboxyl-terminal hydrolase 32, found in Mus musculus (Mouse).